Here is a 275-residue protein sequence, read N- to C-terminus: uncharacterized protein (275 aa).

This is an uncharacterized protein from Methanocaldococcus jannaschii (strain ATCC 43067 / DSM 2661 / JAL-1 / JCM 10045 / NBRC 100440) (Methanococcus jannaschii).